The primary structure comprises 101 residues: Large ribosomal subunit protein uL24 (101 aa).

The protein belongs to the universal ribosomal protein uL24 family. In terms of assembly, part of the 50S ribosomal subunit.

Functionally, one of two assembly initiator proteins, it binds directly to the 5'-end of the 23S rRNA, where it nucleates assembly of the 50S subunit. In terms of biological role, one of the proteins that surrounds the polypeptide exit tunnel on the outside of the subunit. This Streptococcus thermophilus (strain CNRZ 1066) protein is Large ribosomal subunit protein uL24.